A 291-amino-acid chain; its full sequence is Small ribosomal subunit biogenesis GTPase RsgA 2 (291 aa).

In terms of domain architecture, CP-type G spans 63–221 (ENALVRPPVA…VADTPGFSSI (159 aa)). GTP contacts are provided by residues 112 to 115 (SKMD) and 164 to 172 (GQSGVGKST). Residues Cys-245, Cys-250, His-252, and Cys-258 each coordinate Zn(2+).

It belongs to the TRAFAC class YlqF/YawG GTPase family. RsgA subfamily. In terms of assembly, monomer. Associates with 30S ribosomal subunit, binds 16S rRNA. It depends on Zn(2+) as a cofactor.

The protein resides in the cytoplasm. In terms of biological role, one of several proteins that assist in the late maturation steps of the functional core of the 30S ribosomal subunit. Helps release RbfA from mature subunits. May play a role in the assembly of ribosomal proteins into the subunit. Circularly permuted GTPase that catalyzes slow GTP hydrolysis, GTPase activity is stimulated by the 30S ribosomal subunit. The chain is Small ribosomal subunit biogenesis GTPase RsgA 2 from Listeria monocytogenes serovar 1/2a (strain ATCC BAA-679 / EGD-e).